We begin with the raw amino-acid sequence, 147 residues long: Ribonuclease 4 (147 aa).

A signal peptide spans 1–28 (MALQRTQAFLLLLLLTLLGLGLVQPSYG). Glutamine 29 carries the post-translational modification Pyrrolidone carboxylic acid. Residues arginine 35, histidine 40, lysine 68, asparagine 71, and threonine 72 each coordinate dUMP. Residue histidine 40 is the Proton acceptor of the active site. 4 disulfides stabilise this stretch: cysteine 53–cysteine 109, cysteine 67–cysteine 120, cysteine 85–cysteine 135, and cysteine 92–cysteine 99. Histidine 144 serves as the catalytic Proton donor. Residue phenylalanine 145 participates in dUMP binding.

This sequence belongs to the pancreatic ribonuclease family.

Its subcellular location is the secreted. In terms of biological role, cleaves preferentially after uridine bases. Has antimicrobial activity against uropathogenic E.coli (UPEC). Probably contributes to urinary tract sterility. The chain is Ribonuclease 4 (RNASE4) from Bos taurus (Bovine).